A 411-amino-acid polypeptide reads, in one-letter code: NADH-quinone oxidoreductase subunit D 2 (411 aa).

The protein belongs to the complex I 49 kDa subunit family. NDH-1 is composed of 14 different subunits. Subunits NuoB, C, D, E, F, and G constitute the peripheral sector of the complex.

It localises to the cell membrane. It carries out the reaction a quinone + NADH + 5 H(+)(in) = a quinol + NAD(+) + 4 H(+)(out). Functionally, NDH-1 shuttles electrons from NADH, via FMN and iron-sulfur (Fe-S) centers, to quinones in the respiratory chain. The immediate electron acceptor for the enzyme in this species is believed to be ubiquinone. Couples the redox reaction to proton translocation (for every two electrons transferred, four hydrogen ions are translocated across the cytoplasmic membrane), and thus conserves the redox energy in a proton gradient. The polypeptide is NADH-quinone oxidoreductase subunit D 2 (Chloroflexus aurantiacus (strain ATCC 29366 / DSM 635 / J-10-fl)).